The following is a 75-amino-acid chain: OcyC3 (75 aa).

Residues 1 to 22 (MQYKTFLVISLAYLLVADEAAA) form the signal peptide. The propeptide occupies 51 to 75 (EINNVFEPYHENLDLELERFLSQLQ).

Expressed by the venom gland.

It localises to the secreted. It is found in the target cell membrane. Functionally, amphipathic peptide with probable antimicrobial activity. May act by disrupting the integrity of the bacterial cell membrane. The sequence is that of OcyC3 from Opisthacanthus cayaporum (South American scorpion).